Reading from the N-terminus, the 662-residue chain is Interferon-induced GTP-binding protein Mx1 (662 aa).

Methionine 1 is modified (N-acetylmethionine). The Dynamin-type G domain occupies 67 to 340; that stretch reads DLALPAIAVI…LITHICKSLP (274 aa). Residues 77–84 form a G1 motif region; the sequence is GDQSSGKS. 77-84 provides a ligand contact to GTP; the sequence is GDQSSGKS. Residues 102–104 are G2 motif; the sequence is VTR. Positions 178 to 181 are G3 motif; sequence DLPG. GTP-binding positions include 178-182 and 247-250; these read DLPGI and TKPD. Positions 247-250 are G4 motif; that stretch reads TKPD. The tract at residues 279–282 is G5 motif; the sequence is KCRG. A bundle signaling element (BSE) region spans residues 341–366; that stretch reads LLENQIRESHQRITEELQKYGVDVPE. Positions 366–533 are middle domain; it reads EDENEKMFFL…HFQMEQIVYC (168 aa). The segment at 367–632 is stalk; it reads DENEKMFFLI…KDTYSWLLKE (266 aa). Residues 554–557 are critical for lipid-binding; sequence KKKK. The GED domain maps to 574–662; it reads MEEIFQHLMA…ARRRLAQFPG (89 aa).

It belongs to the TRAFAC class dynamin-like GTPase superfamily. Dynamin/Fzo/YdjA family. As to quaternary structure, homooligomer. Oligomerizes into multimeric filamentous or ring-like structures by virtue of its stalk domain. Oligomerization is critical for GTPase activity, protein stability, and recognition of viral target structures. Interacts with TRPC1, TRPC3, TRPC4, TRPC5, TRPC6 and TRPC7. Interacts with HSPA5. Interacts with TUBB/TUBB5. Interacts with DDX39A and DDX39B. ISGylated.

Its subcellular location is the cytoplasm. The protein resides in the endoplasmic reticulum membrane. The protein localises to the perinuclear region. Functionally, interferon-induced dynamin-like GTPase with antiviral activity. The chain is Interferon-induced GTP-binding protein Mx1 (MX1) from Pongo abelii (Sumatran orangutan).